The primary structure comprises 385 residues: MINLKELKILHTSDWHLGVTSWTSSRPVDRREELKKALDKVVEEAEKREVDLILLTGDLLHSRNNPSVVALHDLLDYLKRMMRTAPVVVLPGNHDWKGLKLFGNFVTSISSDITFVMSFEPVDVEAKRGQKVRILPFPYPDESEALRKNEGDFRFFLESRLNKLYEEALKKEDFAIFMGHFTVEGLAGYAGIEQGREIIINRALIPSVVDYAALGHIHSFREIQKQPLTIYPGSLIRIDFGEEADEKGAVFVELKRGEPPRYERIDASPLPLKTLYYKKIDTSALKSIRDFCRNFPGYVRVVYEEDSGILPDLMGEIDNLVKIERKSRREIEEVLRESPEEFKEELDKLDYFELFKEYLKKREENHEKLLKILDELLDEVKKSEA.

Positions 14, 16, and 58 each coordinate Mn(2+). The active-site Proton donor is His94. Residues His180, His216, and His218 each contribute to the Mn(2+) site.

Belongs to the MRE11/RAD32 family. As to quaternary structure, homodimer. Forms a heterotetramer composed of two Mre11 subunits and two Rad50 subunits. Homodimerization facilitates DNA binding. Mn(2+) serves as cofactor.

With respect to regulation, nuclease activity is regulated by Rad50. The mirin-derivative PFM39, specifically inhibits the 3'-5' exonuclease activity. The N-alkylated mirin-derivatives PFM03 and PFM01 specifically inhibit the endonuclease activity. Functionally, part of the Rad50/Mre11 complex, which is involved in the early steps of DNA double-strand break (DSB) repair. The complex may facilitate opening of the processed DNA ends to aid in the recruitment of HerA and NurA. Mre11 binds to DSB ends and has both double-stranded 3'-5' exonuclease activity and single-stranded endonuclease activity. In Thermotoga maritima (strain ATCC 43589 / DSM 3109 / JCM 10099 / NBRC 100826 / MSB8), this protein is DNA double-strand break repair protein Mre11.